A 365-amino-acid polypeptide reads, in one-letter code: UDP-N-acetylglucosamine--N-acetylmuramyl-(pentapeptide) pyrophosphoryl-undecaprenol N-acetylglucosamine transferase (365 aa).

UDP-N-acetyl-alpha-D-glucosamine-binding positions include 13–15, Asn125, Arg165, Ser192, and Gln293; that span reads TGG.

The protein belongs to the glycosyltransferase 28 family. MurG subfamily.

It localises to the cell inner membrane. It catalyses the reaction di-trans,octa-cis-undecaprenyl diphospho-N-acetyl-alpha-D-muramoyl-L-alanyl-D-glutamyl-meso-2,6-diaminopimeloyl-D-alanyl-D-alanine + UDP-N-acetyl-alpha-D-glucosamine = di-trans,octa-cis-undecaprenyl diphospho-[N-acetyl-alpha-D-glucosaminyl-(1-&gt;4)]-N-acetyl-alpha-D-muramoyl-L-alanyl-D-glutamyl-meso-2,6-diaminopimeloyl-D-alanyl-D-alanine + UDP + H(+). Its pathway is cell wall biogenesis; peptidoglycan biosynthesis. Functionally, cell wall formation. Catalyzes the transfer of a GlcNAc subunit on undecaprenyl-pyrophosphoryl-MurNAc-pentapeptide (lipid intermediate I) to form undecaprenyl-pyrophosphoryl-MurNAc-(pentapeptide)GlcNAc (lipid intermediate II). This chain is UDP-N-acetylglucosamine--N-acetylmuramyl-(pentapeptide) pyrophosphoryl-undecaprenol N-acetylglucosamine transferase, found in Ruegeria sp. (strain TM1040) (Silicibacter sp.).